The sequence spans 306 residues: Bifunctional protein FolD 1 (306 aa).

NADP(+) is bound by residues 168–170 (GRS), Ser193, and Ile234.

The protein belongs to the tetrahydrofolate dehydrogenase/cyclohydrolase family. Homodimer.

The enzyme catalyses (6R)-5,10-methylene-5,6,7,8-tetrahydrofolate + NADP(+) = (6R)-5,10-methenyltetrahydrofolate + NADPH. It carries out the reaction (6R)-5,10-methenyltetrahydrofolate + H2O = (6R)-10-formyltetrahydrofolate + H(+). The protein operates within one-carbon metabolism; tetrahydrofolate interconversion. Functionally, catalyzes the oxidation of 5,10-methylenetetrahydrofolate to 5,10-methenyltetrahydrofolate and then the hydrolysis of 5,10-methenyltetrahydrofolate to 10-formyltetrahydrofolate. This is Bifunctional protein FolD 1 from Rhizobium meliloti (strain 1021) (Ensifer meliloti).